Consider the following 212-residue polypeptide: Small ribosomal subunit protein uS5 (212 aa).

Residues 48–111 (LEDEVLDINM…DIAKLNIIDV (64 aa)) form the S5 DRBM domain.

Belongs to the universal ribosomal protein uS5 family. In terms of assembly, part of the 30S ribosomal subunit. Contacts protein S4.

With S4 and S12 plays an important role in translational accuracy. The chain is Small ribosomal subunit protein uS5 from Haloarcula marismortui (strain ATCC 43049 / DSM 3752 / JCM 8966 / VKM B-1809) (Halobacterium marismortui).